Consider the following 266-residue polypeptide: tRNA pseudouridine synthase A (266 aa).

D55 functions as the Nucleophile in the catalytic mechanism. Residue Y110 participates in substrate binding.

This sequence belongs to the tRNA pseudouridine synthase TruA family.

The enzyme catalyses uridine(38/39/40) in tRNA = pseudouridine(38/39/40) in tRNA. Formation of pseudouridine at positions 38, 39 and 40 in the anticodon stem and loop of transfer RNAs. This is tRNA pseudouridine synthase A from Thermococcus sibiricus (strain DSM 12597 / MM 739).